A 1372-amino-acid chain; its full sequence is DNA-directed RNA polymerase subunit beta' (1372 aa).

Zn(2+) is bound by residues C69, C71, C84, and C87. Mg(2+) contacts are provided by D460, D462, and D464. Zn(2+) is bound by residues C808, C882, C889, and C892.

This sequence belongs to the RNA polymerase beta' chain family. The RNAP catalytic core consists of 2 alpha, 1 beta, 1 beta' and 1 omega subunit. When a sigma factor is associated with the core the holoenzyme is formed, which can initiate transcription. Requires Mg(2+) as cofactor. Zn(2+) is required as a cofactor.

The catalysed reaction is RNA(n) + a ribonucleoside 5'-triphosphate = RNA(n+1) + diphosphate. Its function is as follows. DNA-dependent RNA polymerase catalyzes the transcription of DNA into RNA using the four ribonucleoside triphosphates as substrates. This Rickettsia rickettsii (strain Iowa) protein is DNA-directed RNA polymerase subunit beta'.